Reading from the N-terminus, the 234-residue chain is Opacity protein opA55 (234 aa).

A signal peptide is located at residue A1.

This sequence belongs to the opacity porin family.

The protein localises to the cell outer membrane. Implicated in a number of adherence functions. OPA proteins are implicated in pathogenesis and are subject to phase variation. This is Opacity protein opA55 (opaE) from Neisseria gonorrhoeae.